We begin with the raw amino-acid sequence, 540 residues long: Phosphatidylinositol 4-phosphate 5-kinase type-1 beta (540 aa).

Residues Met1–Lys23 are disordered. The region spanning Thr25–Val395 is the PIPK domain.

It localises to the cytoplasm. The protein resides in the cytosol. It is found in the cell membrane. The protein localises to the endomembrane system. It carries out the reaction a 1,2-diacyl-sn-glycero-3-phospho-(1D-myo-inositol 4-phosphate) + ATP = a 1,2-diacyl-sn-glycero-3-phospho-(1D-myo-inositol-4,5-bisphosphate) + ADP + H(+). It catalyses the reaction 1-octadecanoyl-2-(5Z,8Z,11Z,14Z)-eicosatetraenoyl-sn-glycero-3-phospho-1D-myo-inositol 4-phosphate + ATP = 1-octadecanoyl-2-(5Z,8Z,11Z,14Z)-eicosatetraenoyl-sn-glycero-3-phospho-1D-myo-inositol 4,5-bisphosphate + ADP + H(+). The catalysed reaction is 1-octadecanoyl-2-(9Z)-octadecenoyl-sn-glycero-3-phospho-1D-myo-inositol 4-phosphate + ATP = 1-octadecanoyl-2-(9Z)-octadecenoyl-sn-glycero-3-phospho-1D-myo-inositol 4,5-bisphosphate + ADP + H(+). The enzyme catalyses 1-octadecanoyl-2-(9Z)-octadecenoyl-sn-glycero-3-phospho-1D-myo-inositol + ATP = 1-octadecanoyl-2-(9Z)-octadecenoyl-sn-glycero-3-phospho-1D-myo-inositol 5-phosphate + ADP + H(+). It carries out the reaction 1-octadecanoyl-2-(9Z,12Z)-octadecadienoyl-sn-glycero-3-phospho-1D-myo-inositol + ATP = 1-octadecanoyl-2-(9Z,12Z)-octadecadienoyl-sn-glycero-3-phospho-1D-myo-inositol 5-phosphate + ADP + H(+). It catalyses the reaction 1-octadecanoyl-2-(5Z,8Z,11Z,14Z-eicosatetraenoyl)-sn-glycero-3-phospho-(1D-myo-inositol) + ATP = 1-octadecanoyl-2-(5Z,8Z,11Z,14Z)-eicosatetraenoyl-sn-glycero-3-phospho-1D-myo-inositol 5-phosphate + ADP + H(+). The catalysed reaction is 1,2-di-(9Z,12Z)-octadecadienoyl-sn-glycero-3-phospho-1D-myo-inositol + ATP = 1,2-di(9Z,12Z)-octadecadienoyl-sn-glycero-3-phospho-1D-myo-inositol 5-phosphate + ADP + H(+). In terms of biological role, catalyzes the phosphorylation of phosphatidylinositol 4-phosphate (PtdIns(4)P/PI4P) to form phosphatidylinositol 4,5-bisphosphate (PtdIns(4,5)P2/PIP2), a lipid second messenger that regulates several cellular processes such as signal transduction, vesicle trafficking, actin cytoskeleton dynamics, cell adhesion, and cell motility. PtdIns(4,5)P2 can directly act as a second messenger or can be utilized as a precursor to generate other second messengers: inositol 1,4,5-trisphosphate (IP3), diacylglycerol (DAG) or phosphatidylinositol-3,4,5-trisphosphate (PtdIns(3,4,5)P3/PIP3). The sequence is that of Phosphatidylinositol 4-phosphate 5-kinase type-1 beta (PIP5K1B) from Gallus gallus (Chicken).